Reading from the N-terminus, the 618-residue chain is Crinkler effector protein 16 (618 aa).

The N-terminal stretch at 1-19 is a signal peptide; that stretch reads MVVVSLQCAIVGQAGSSFD. The tract at residues 18-57 is LQLFLAK domain; sequence FDVEIDDGAKVSKLKDAIKAKKPNDFKVVDADKLHLFLAK. Positions 58–139 are DWL domain; that stretch reads QPVEDESGKE…NMELPSSEQI (82 aa). Residues 140-146 carry the HVLVXXP motif motif; sequence HVLVVVP. The N-linked (GlcNAc...) asparagine glycan is linked to N534.

The protein belongs to the Crinkler effector family.

Its subcellular location is the secreted. It localises to the host nucleus. Its function is as follows. Secreted effector that elicits necrosis in host plants, a characteristic of plant innate immunity. The sequence is that of Crinkler effector protein 16 from Phytophthora infestans (Potato late blight agent).